We begin with the raw amino-acid sequence, 699 residues long: Polyribonucleotide nucleotidyltransferase (699 aa).

The Mg(2+) site is built by D484 and D490. The 60-residue stretch at 551 to 610 (PRITTIQVKPDQVRTVIGPGGKNVRGIIEATGCAIDIEDDGRINIASADGDACKAAIKMI) folds into the KH domain. One can recognise an S1 motif domain in the interval 620–688 (GKLYMATVKK…RQGKIKLSRK (69 aa)).

The protein belongs to the polyribonucleotide nucleotidyltransferase family. The cofactor is Mg(2+).

The protein resides in the cytoplasm. It carries out the reaction RNA(n+1) + phosphate = RNA(n) + a ribonucleoside 5'-diphosphate. Its function is as follows. Involved in mRNA degradation. Catalyzes the phosphorolysis of single-stranded polyribonucleotides processively in the 3'- to 5'-direction. This is Polyribonucleotide nucleotidyltransferase from Syntrophotalea carbinolica (strain DSM 2380 / NBRC 103641 / GraBd1) (Pelobacter carbinolicus).